The sequence spans 247 residues: Phosphoribosylaminoimidazole-succinocarboxamide synthase (247 aa).

The protein belongs to the SAICAR synthetase family.

The catalysed reaction is 5-amino-1-(5-phospho-D-ribosyl)imidazole-4-carboxylate + L-aspartate + ATP = (2S)-2-[5-amino-1-(5-phospho-beta-D-ribosyl)imidazole-4-carboxamido]succinate + ADP + phosphate + 2 H(+). Its pathway is purine metabolism; IMP biosynthesis via de novo pathway; 5-amino-1-(5-phospho-D-ribosyl)imidazole-4-carboxamide from 5-amino-1-(5-phospho-D-ribosyl)imidazole-4-carboxylate: step 1/2. This Prochlorococcus marinus (strain NATL1A) protein is Phosphoribosylaminoimidazole-succinocarboxamide synthase.